The chain runs to 687 residues: DNA ligase (687 aa).

NAD(+) contacts are provided by residues 33–37 (DAEFD), 83–84 (SL), and E113. Catalysis depends on K115, which acts as the N6-AMP-lysine intermediate. Positions 136, 176, 292, and 316 each coordinate NAD(+). Zn(2+) is bound by residues C410, C413, C429, and C435. One can recognise a BRCT domain in the interval 599-687 (SVPRTLAGVT…GPPAEVGEPT (89 aa)).

This sequence belongs to the NAD-dependent DNA ligase family. LigA subfamily. It depends on Mg(2+) as a cofactor. Mn(2+) serves as cofactor.

The catalysed reaction is NAD(+) + (deoxyribonucleotide)n-3'-hydroxyl + 5'-phospho-(deoxyribonucleotide)m = (deoxyribonucleotide)n+m + AMP + beta-nicotinamide D-nucleotide.. In terms of biological role, DNA ligase that catalyzes the formation of phosphodiester linkages between 5'-phosphoryl and 3'-hydroxyl groups in double-stranded DNA using NAD as a coenzyme and as the energy source for the reaction. It is essential for DNA replication and repair of damaged DNA. The chain is DNA ligase from Mycobacterium marinum (strain ATCC BAA-535 / M).